The primary structure comprises 509 residues: Glutamyl-tRNA(Gln) amidotransferase subunit B, mitochondrial (509 aa).

The protein belongs to the GatB/GatE family. GatB subfamily. As to quaternary structure, subunit of the heterotrimeric GatFAB amidotransferase (AdT) complex, composed of A, B and F subunits.

Its subcellular location is the mitochondrion. It carries out the reaction L-glutamyl-tRNA(Gln) + L-glutamine + ATP + H2O = L-glutaminyl-tRNA(Gln) + L-glutamate + ADP + phosphate + H(+). Allows the formation of correctly charged Gln-tRNA(Gln) through the transamidation of misacylated Glu-tRNA(Gln) in the mitochondria. The reaction takes place in the presence of glutamine and ATP through an activated gamma-phospho-Glu-tRNA(Gln). In Candida dubliniensis (strain CD36 / ATCC MYA-646 / CBS 7987 / NCPF 3949 / NRRL Y-17841) (Yeast), this protein is Glutamyl-tRNA(Gln) amidotransferase subunit B, mitochondrial.